The chain runs to 356 residues: Transcription factor ATOH1 (356 aa).

Residues 1 to 21 are compositionally biased toward basic and acidic residues; the sequence is MSRLLHAEEWAEVKELGDHHR. Disordered regions lie at residues 1-56 and 92-125; these read MSRL…PELS and SEAA…GPVK. The span at 26 to 40 shows a compositional bias: pro residues; sequence HHLPQPPPPPPPQPP. Basic and acidic residues predominate over residues 96–109; the sequence is APRDEVDGRGELVR. Residues 110-124 are compositionally biased toward low complexity; that stretch reads RSSGGASSSKSPGPV. Residues 161–213 enclose the bHLH domain; sequence QRRLAANARERRRMHGLNHAFDQLRNVIPSFNNDKKLSKYETLQMAQIYINAL. Disordered regions lie at residues 218–279 and 314–356; these read QTPS…TRFS and SPSL…DEAS. A compositionally biased stretch (low complexity) spans 252 to 266; that stretch reads NATAAGAQQASGGSQ. A compositionally biased stretch (basic and acidic residues) spans 337 to 356; it reads HRSDGEFSPHSHYSDSDEAS.

As to quaternary structure, efficient DNA binding requires dimerization with another bHLH protein.

It localises to the nucleus. In terms of biological role, transcriptional regulator. Activates E box-dependent transcription in collaboration with TCF3/E47, but the activity is completely antagonized by the negative regulator of neurogenesis HES1. Plays a role in the differentiation of subsets of neural cells by activating E box-dependent transcription. The polypeptide is Transcription factor ATOH1 (Pan troglodytes (Chimpanzee)).